The sequence spans 118 residues: Putative pterin-4-alpha-carbinolamine dehydratase (118 aa).

Belongs to the pterin-4-alpha-carbinolamine dehydratase family.

It carries out the reaction (4aS,6R)-4a-hydroxy-L-erythro-5,6,7,8-tetrahydrobiopterin = (6R)-L-erythro-6,7-dihydrobiopterin + H2O. This chain is Putative pterin-4-alpha-carbinolamine dehydratase, found in Pseudomonas aeruginosa (strain LESB58).